The chain runs to 744 residues: Adenosylcobalamin-dependent ribonucleoside-triphosphate reductase (744 aa).

Residues C120 and C424 are joined by a disulfide bond. The interval 148–159 (SMPFSFLFDQLM) is effector region-1. Positions 169–318 (VNSNIKQIPK…ICNLIGKTVV (150 aa)) are effector region-2. Residues C413 and E415 contribute to the active site. Residues 570-631 (FHYAGYLIQR…SKNFASAGTV (62 aa)) form an adenosylcobalamin-binding-1 region. An adenosylcobalamin-binding-2 region spans residues 690–729 (LKQAPKEPINKKTYEERAALITDDVEEVFTKQNDDQKGLE).

It belongs to the class II ribonucleoside-triphosphate reductase family. As to quaternary structure, monomer. Requires adenosylcob(III)alamin as cofactor.

It carries out the reaction a 2'-deoxyribonucleoside 5'-triphosphate + [thioredoxin]-disulfide + H2O = a ribonucleoside 5'-triphosphate + [thioredoxin]-dithiol. Its activity is regulated as follows. Allosterically regulated by ATP and dNTP. In Lactobacillus acidophilus (strain ATCC 700396 / NCK56 / N2 / NCFM), this protein is Adenosylcobalamin-dependent ribonucleoside-triphosphate reductase (rtpR).